The chain runs to 236 residues: Reticulon-3 (236 aa).

Low complexity predominate over residues 1–24 (MAEPSAATQSPSISSSSSGAEPSA). The tract at residues 1-31 (MAEPSAATQSPSISSSSSGAEPSAPGGGGSP) is disordered. The residue at position 2 (A2) is an N-acetylalanine. Over 2–67 (AEPSAATQSP…KKTGFVFGTT (66 aa)) the chain is Cytoplasmic. At S30 the chain carries Phosphoserine. The Reticulon domain occupies 48–236 (VHDLIFWRDV…LPGIAKKKAE (189 aa)). Positions 68 to 91 (LIMLLSLAAFSVISVVSYLILALL) form an intramembrane region, helical. At 92 to 151 (SVTISFRIYKSVIQAVQKSEEGHPFKAYLDVDITLSSEAFHNYMNAAMVHINRALKLIIR) the chain is on the cytoplasmic side. Residues 152–172 (LFLVEDLVDSLKLAVFMWLMT) constitute an intramembrane region (helical). Residues 173-176 (YVGA) lie on the Cytoplasmic side of the membrane. Positions 177–197 (VFNGITLLILAELLIFSVPIV) form an intramembrane region, helical. Positions 191–236 (IFSVPIVYEKYKTQIDHYVGIARDQTKSIVEKIQAKLPGIAKKKAE) are interaction with FADD. At 198 to 236 (YEKYKTQIDHYVGIARDQTKSIVEKIQAKLPGIAKKKAE) the chain is on the cytoplasmic side. The tract at residues 204-206 (QID) is interaction with BACE1.

In terms of assembly, homodimer. Interacts with RTN4. Interacts with BACE1, BACE2, BCL2 and FADD. Interacts with ATL1 and ATL2. Interacts with TMEM33. Interacts with ZFYVE27 and with KIF5A in a ZFYVE27-dependent manner. Interacts with RIGI. Interacts with TRIM25.

The protein resides in the endoplasmic reticulum membrane. Its subcellular location is the golgi apparatus membrane. Functionally, may be involved in membrane trafficking in the early secretory pathway. Inhibits BACE1 activity and amyloid precursor protein processing. May induce caspase-8 cascade and apoptosis. May favor BCL2 translocation to the mitochondria upon endoplasmic reticulum stress. Induces the formation of endoplasmic reticulum tubules. Acts also as an inflammation-resolving regulator by interacting with both TRIM25 and RIGI, subsequently impairing RIGI 'Lys-63'-linked polyubiquitination leading to IRF3 and NF-kappa-B inhibition. The polypeptide is Reticulon-3 (RTN3) (Pongo abelii (Sumatran orangutan)).